Consider the following 1269-residue polypeptide: Furin-like protease 1, isoforms 1/1-X/2 (1269 aa).

Residues 1–57 form a disordered region; sequence MKNDVVRWSRQPTSNTTNSSSSSRSDSNSTHKHRSKSNKLNARQLGSNAARSCQQRS. Residues 13–28 are compositionally biased toward low complexity; it reads TSNTTNSSSSSRSDSN. Residues asparagine 15, asparagine 18, and asparagine 28 are each glycosylated (N-linked (GlcNAc...) asparagine). The segment covering 38–57 has biased composition (polar residues); that stretch reads NKLNARQLGSNAARSCQQRS. N-linked (GlcNAc...) asparagine glycosylation occurs at asparagine 108. The helical transmembrane segment at 119–139 threads the bilayer; sequence VFLLALQFSAVVFLCNINVGF. Residues 150–163 show a composition bias toward low complexity; sequence SAGGSSPAAPSSAP. The tract at residues 150–187 is disordered; it reads SAGGSSPAAPSSAPSSPPTVAVPPPPPPSSALKVDPNG. Pro residues predominate over residues 164-178; the sequence is SSPPTVAVPPPPPPS. N-linked (GlcNAc...) asparagine glycosylation occurs at asparagine 333. The region spanning 340-654 is the Peptidase S8 domain; it reads MWYLNRGGGL…YGLMDAAEMV (315 aa). Residues aspartate 372 and histidine 413 each act as charge relay system in the active site. The N-linked (GlcNAc...) asparagine glycan is linked to asparagine 426. 2 disulfide bridges follow: cysteine 430-cysteine 579 and cysteine 522-cysteine 552. Residue serine 587 is the Charge relay system of the active site. An N-linked (GlcNAc...) asparagine glycan is attached at asparagine 606. The region spanning 662–793 is the P/Homo B domain; the sequence is AVPEQQRCEI…SLIFYGTTQS (132 aa). The cysteines at positions 669 and 695 are disulfide-linked. Asparagine 727 and asparagine 814 each carry an N-linked (GlcNAc...) asparagine glycan. Disordered regions lie at residues 796–875, 891–1015, 1031–1050, and 1057–1083; these read PNDP…PPKQ, ANGK…NSRI, ELEP…AKQG, and LFKP…PSQT. 2 stretches are compositionally biased toward low complexity: residues 811–821 and 835–851; these read TTPNSSSTTSN and PNNF…LPLG. Asparagine 857 carries N-linked (GlcNAc...) asparagine glycosylation. A compositionally biased stretch (polar residues) spans 858 to 868; it reads KSSYVTNNPLL. 2 N-linked (GlcNAc...) asparagine glycosylation sites follow: asparagine 897 and asparagine 908. Low complexity-rich tracts occupy residues 905 to 915 and 929 to 940; these read NKGNKSNNGNK and TTQSTIIQTSTS. Residues 975-985 show a composition bias toward basic and acidic residues; it reads KSYDEKSRKVV. Asparagine 994 is a glycosylation site (N-linked (GlcNAc...) asparagine). The segment covering 1005-1014 has biased composition (polar residues); sequence ESTTTSSNSR. The span at 1062-1074 shows a compositional bias: polar residues; that stretch reads NGGNSRQGNTKKS. Residues 1233 to 1253 traverse the membrane as a helical segment; that stretch reads LGLSLLFFMIMQVFFLNFKHA.

Belongs to the peptidase S8 family. Furin subfamily. Ca(2+) serves as cofactor. In adults, isoform 1-X is expressed in CNS, fat body and female reproductive tissues, and in embryos, in CNS, tracheal pits, hindgut, posterior spiracles and anal pads.

Its subcellular location is the golgi apparatus membrane. It catalyses the reaction Release of mature proteins from their proproteins by cleavage of -Arg-Xaa-Yaa-Arg-|-Zaa- bonds, where Xaa can be any amino acid and Yaa is Arg or Lys. Releases albumin, complement component C3 and von Willebrand factor from their respective precursors.. Functionally, furin is likely to represent the ubiquitous endoprotease activity within constitutive secretory pathways and capable of cleavage at the RX(K/R)R consensus motif. This chain is Furin-like protease 1, isoforms 1/1-X/2 (Fur1), found in Drosophila melanogaster (Fruit fly).